A 338-amino-acid polypeptide reads, in one-letter code: Ferredoxin--NADP reductase (338 aa).

8 residues coordinate FAD: Thr14, Asp33, Gln41, Tyr46, Val86, Phe120, Asp284, and Thr325.

It belongs to the ferredoxin--NADP reductase type 2 family. Homodimer. It depends on FAD as a cofactor.

It catalyses the reaction 2 reduced [2Fe-2S]-[ferredoxin] + NADP(+) + H(+) = 2 oxidized [2Fe-2S]-[ferredoxin] + NADPH. The chain is Ferredoxin--NADP reductase from Pelagibacter ubique (strain HTCC1062).